The following is a 158-amino-acid chain: Snaclec coagulation factor X-activating enzyme light chain 2 (158 aa).

A signal peptide spans 1 to 24; that stretch reads MGRFISVSFGLLVVFLSLSGTGAG. Disulfide bonds link cysteine 27–cysteine 38, cysteine 55–cysteine 152, and cysteine 127–cysteine 144. Positions 34–153 constitute a C-type lectin domain; sequence YRYFCYRVFK…CEERYLFVCK (120 aa). Residue asparagine 82 is glycosylated (N-linked (GlcNAc...) (complex) asparagine).

Belongs to the snaclec family. Heterotrimer; disulfide-linked. The heterotrimer consists of 1 heavy chain (a metalloproteinase) and 2 light chains: LC1 and LC2. Post-translationally, N-glycosylated; probably required for conformation. Removal of easily accessible sugars does not change its functional capacity, but removal of the core sugars with N-glycanase causes a virtually complete loss of enzyme activity, apparently as a result of major conformational changes in the molecule. Not O-glycosylated. In terms of tissue distribution, expressed by the venom gland.

The protein resides in the secreted. Regulatory subunit of the blood coagulation factor X- and IX-activating enzyme. The enzyme activates coagulation factor X (F10) by cleaving the Arg-Ile bond and is also able to activate coagulation factor IX (F9) and protein S (PROS1) by specific cleavage of Arg-Ile and Arg-Val bonds. May serve as an exosite by which the enzyme recognizes and binds to the Gla domain of factor X (F10) and factor IX (F9) in a calcium-dependent manner. This is Snaclec coagulation factor X-activating enzyme light chain 2 (LC2) from Daboia siamensis (Eastern Russel's viper).